Reading from the N-terminus, the 25-residue chain is Aurein-5.2 (25 aa).

Expressed by the skin dorsal glands.

The protein resides in the secreted. Its function is as follows. Has antimicrobial activity against L.lactis and S.uberis. This chain is Aurein-5.2, found in Ranoidea raniformis (Southern bell frog).